The following is a 317-amino-acid chain: MAELACFCYPHLENDSYKFIPFNNLAIKCMLTAKVEKKDQDKFYNSIVYGIAPPPQFKKRYNTSDNSRGMNYETIMFNKVAVLICEALNSIKITQSDVANVLSRVVSVRHLENLVLRKENHQDVLFHSKELLLKSVLIAIGQSKEIETTATAEGGEIVFQNAAFTMWKLTYLDHKLMPILDQNFIEYKITLNEDKPISDVCIKELVAELRWQYNRFAVITHGKGHYRVVKYSSVANHADRVFATYKNSAKSGNVIDFNLLDQRIIWQNWYAFTSSMKQGNTLDVCKKLLFQKMKQEKNPFKGLSTDRKMDEVSHVGI.

ATP is bound by residues Ser107–Arg109, Lys188, and His221–Lys223. An RNA-binding region spans residues Leu205–Val241. His225 (for NTPase and RTPase activities) is an active-site residue. Arg227 provides a ligand contact to ATP.

The protein belongs to the rotavirus NSP2 family. In terms of assembly, homooctamer. Interacts with VP1; this interaction is weak. Interacts with NSP5; this interaction leads to up-regulation of NSP5 phosphorylation and formation of viral factories. Interacts with host DCP1A, DCP1B, DDX6, EDC4 and EIF2S1/eIF2-alpha; these interactions are probably part of the sequestration of some host SGs and PBs proteins in viral factories. Mg(2+) serves as cofactor.

The protein resides in the host cytoplasm. In terms of biological role, participates in replication and packaging of the viral genome. Plays a crucial role, together with NSP5, in the formation of virus factories (viroplasms), which are large inclusions in the host cytoplasm where replication intermediates are assembled and viral RNA replication takes place. Displays ssRNA binding, NTPase, RNA triphosphatase (RTPase) and ATP-independent helix-unwinding activities. The unwinding activity may prepare and organize plus-strand RNAs for packaging and replication by removing interfering secondary structures. The RTPase activity plays a role in the removal of the gamma-phosphate from the rotavirus RNA minus strands of dsRNA genome segments. Participates in the selective exclusion of host proteins from stress granules (SG) and P bodies (PB). Also participates in the sequestration of these remodeled organelles in viral factories. The chain is Non-structural protein 2 from Rotavirus A (strain RVA/Human/United States/Wa/1974/G1P1A[8]) (RV-A).